Reading from the N-terminus, the 244-residue chain is Flagellar brake protein YcgR (244 aa).

Residues 112-230 (QRRRYFRISA…ERQLQRIIFS (119 aa)) enclose the PilZ domain.

This sequence belongs to the YcgR family. In terms of assembly, monomer. Interacts with MotA in the flagellar basal bodies. In another study it was not seen to interact with MotA, but instead with FliM and FliG, also in the flagellar basal body.

It localises to the bacterial flagellum basal body. In terms of biological role, acts as a flagellar brake, regulating swimming and swarming in a bis-(3'-5') cyclic diguanylic acid (c-di-GMP)-dependent manner. When bound to c-di-GMP it binds to elements of the flagellar motor (MotA and/or FliG and FliM, binding to FliM also occurs in the absence of c-di-GMP), causing the motor to slow down. Thus, increasing levels of c-di-GMP lead to decreased motility. Probably binds 1 c-di-GMP dimer per subunit. The polypeptide is Flagellar brake protein YcgR (ycgR) (Escherichia coli (strain K12)).